The primary structure comprises 242 residues: ATP-dependent dethiobiotin synthetase BioD (242 aa).

Position 12–17 (12–17) interacts with ATP; the sequence is EVGKTV. Position 16 (T16) interacts with Mg(2+). K37 is an active-site residue. S41 serves as a coordination point for substrate. ATP-binding positions include D51 and 112-115; that span reads EGAG. Residues D51 and E112 each contribute to the Mg(2+) site.

It belongs to the dethiobiotin synthetase family. As to quaternary structure, homodimer. It depends on Mg(2+) as a cofactor.

It localises to the cytoplasm. It carries out the reaction (7R,8S)-7,8-diammoniononanoate + CO2 + ATP = (4R,5S)-dethiobiotin + ADP + phosphate + 3 H(+). The protein operates within cofactor biosynthesis; biotin biosynthesis; biotin from 7,8-diaminononanoate: step 1/2. Functionally, catalyzes a mechanistically unusual reaction, the ATP-dependent insertion of CO2 between the N7 and N8 nitrogen atoms of 7,8-diaminopelargonic acid (DAPA, also called 7,8-diammoniononanoate) to form a ureido ring. This Bacillus thuringiensis (strain Al Hakam) protein is ATP-dependent dethiobiotin synthetase BioD.